The following is a 558-amino-acid chain: Phosphatidylserine lipase ABHD16A (558 aa).

Helical transmembrane passes span 60-80 and 93-113; these read ILALASVFWSISYYSSPFAFF and VVPFSHYAGTLLLLLAGVACL. At 114–558 the chain is on the cytoplasmic side; it reads RGIGRWTNPQ…AQHFQMPWHL (445 aa). The AB hydrolase-1 domain occupies 281 to 406; sequence LVICCEGNAG…ALVTRTVRQH (126 aa). Active-site charge relay system residues include serine 355, aspartate 430, and histidine 507.

This sequence belongs to the AB hydrolase superfamily. ABHD16 family.

The protein localises to the membrane. The catalysed reaction is 1-heptadecanoyl-2-(5Z,8Z,11Z,14Z-eicosatetraenoyl)-sn-glycero-3-phosphoserine + H2O = 1-heptadecanoyl-sn-glycero-3-phosphoserine + (5Z,8Z,11Z,14Z)-eicosatetraenoate + H(+). The enzyme catalyses 1-hexadecanoyl-2-(9Z-octadecenoyl)-sn-glycero-3-phospho-L-serine + H2O = 1-hexadecanoyl-sn-glycero-3-phospho-L-serine + (9Z)-octadecenoate + H(+). It catalyses the reaction 1-octadecanoyl-2-(9Z,12Z-octadecadienoyl)-sn-glycero-3-phosphoserine + H2O = 1-octadecanoyl-sn-glycero-3-phosphoserine + (9Z,12Z)-octadecadienoate + H(+). It carries out the reaction 1-heptadecanoyl-2-(5Z,8Z,11Z,14Z-eicosatetraenoyl)-sn-glycero-3-phosphocholine + H2O = 1-heptadecanoyl-sn-glycero-3-phosphocholine + (5Z,8Z,11Z,14Z)-eicosatetraenoate + H(+). The catalysed reaction is 1-hexadecanoyl-2-(9Z-octadecenoyl)-sn-glycero-3-phosphoglycerol + H2O = 1-hexadecanoyl-sn-glycero-3-phosphoglycerol + (9Z)-octadecenoate + H(+). The enzyme catalyses 1-hexadecanoyl-2-(9Z-octadecenoyl)-sn-glycero-3-phospho-(1D-myo-inositol) + H2O = 1-hexadecanoyl-sn-glycero-3-phospho-(1D-myo-inositol) + (9Z)-octadecenoate + H(+). It catalyses the reaction 1-heptadecanoyl-2-(5Z,8Z,11Z,14Z-eicosatetraenoyl)-sn-glycero-3-phosphoethanolamine + H2O = 1-heptadecanoyl-sn-glycero-3-phosphoethanolamine + (5Z,8Z,11Z,14Z)-eicosatetraenoate + H(+). It carries out the reaction 1-hexadecanoyl-2-(9Z-octadecenoyl)-sn-glycero-3-phospho-(1'-sn-glycerol) + H2O = 1-hexadecanoyl-sn-glycero-3-phospho-(1'-sn-glycerol) + (9Z)-octadecenoate + H(+). The catalysed reaction is Hydrolyzes glycerol monoesters of long-chain fatty acids.. The enzyme catalyses 1-tetradecanoylglycerol + H2O = tetradecanoate + glycerol + H(+). It catalyses the reaction 2-hexadecanoylglycerol + H2O = glycerol + hexadecanoate + H(+). It carries out the reaction 1-(9Z-octadecenoyl)-glycerol + H2O = glycerol + (9Z)-octadecenoate + H(+). The catalysed reaction is 2-(9Z-octadecenoyl)-glycerol + H2O = glycerol + (9Z)-octadecenoate + H(+). The enzyme catalyses 2-(9Z,12Z-octadecadienoyl)-glycerol + H2O = (9Z,12Z)-octadecadienoate + glycerol + H(+). It catalyses the reaction 1-(5Z,8Z,11Z,14Z-eicosatetraenoyl)-glycerol + H2O = glycerol + (5Z,8Z,11Z,14Z)-eicosatetraenoate + H(+). It carries out the reaction 2-(5Z,8Z,11Z,14Z-eicosatetraenoyl)-glycerol + H2O = glycerol + (5Z,8Z,11Z,14Z)-eicosatetraenoate + H(+). The catalysed reaction is prostaglandin D2-1-glycerol ester + H2O = prostaglandin D2 + glycerol + H(+). The enzyme catalyses 2-glyceryl-15-deoxy-Delta(12,14)-prostaglandin J2 + H2O = 15-deoxy-Delta(12,14)-prostaglandin J2 + glycerol + H(+). It catalyses the reaction 1-(9Z,12Z-octadecadienoyl)-glycerol + H2O = (9Z,12Z)-octadecadienoate + glycerol + H(+). With respect to regulation, specifically inhibited by alpha-alkylidene-beta-lactone KC01 ((Z)-6-(2-Oxo-4-tridecyloxetan-3-ylidene)hexanamide). Functionally, phosphatidylserine (PS) lipase that mediates the hydrolysis of phosphatidylserine to generate lysophosphatidylserine (LPS). LPS constitutes a class of signaling lipids that regulates immunological and neurological processes. Has no activity towards diacylglycerol, triacylglycerol or lysophosphatidylserine lipase. Also has monoacylglycerol lipase activity, with preference for 1-(9Z,12Z-octadecadienoyl)-glycerol (1-LG) and 2-glyceryl-15-deoxy-Delta(12,14)-prostaglandin J2 (15d-PGJ(2)-G). The polypeptide is Phosphatidylserine lipase ABHD16A (Mus musculus (Mouse)).